The sequence spans 570 residues: Putative ABC transporter ATP-binding protein MW2603 (570 aa).

2 ABC transporter domains span residues isoleucine 6–glutamate 247 and leucine 304–arginine 537. ATP contacts are provided by residues glycine 40 to serine 47 and glycine 338 to serine 345.

This sequence belongs to the ABC transporter superfamily.

The protein localises to the cell membrane. Probably part of an ABC transporter complex. Responsible for energy coupling to the transport system. This chain is Putative ABC transporter ATP-binding protein MW2603, found in Staphylococcus aureus (strain MW2).